The chain runs to 485 residues: Pre-glycoprotein polyprotein GP complex (485 aa).

Gly2 is lipidated: N-myristoyl glycine; by host. The Extracellular segment spans residues 2–17; sequence GQLISFFGEIPTILQE. The chain crosses the membrane as a helical span at residues 18–33; sequence ALNIALIAVSIIATIK. Topologically, residues 34–58 are cytoplasmic; sequence GVVNVWKSGLIQLLMFVMLAGRSCS. Cys57 is a Zn(2+) binding site. Residues 59–424 lie on the Extracellular side of the membrane; that stretch reads VQIGHHLELE…QGRTPLSLVD (366 aa). 4 disulfide bridges follow: Cys85–Cys225, Cys271–Cys284, Cys293–Cys302, and Cys356–Cys377. N-linked (GlcNAc...) asparagine; by host glycosylation is found at Asn88, Asn128, Asn179, and Asn218. N-linked (GlcNAc...) asparagine; by host glycosylation is found at Asn357, Asn365, Asn382, and Asn387. The chain crosses the membrane as a helical span at residues 425-445; that stretch reads VCFWSTLFYTASIFLHLIRIP. Topologically, residues 446 to 485 are cytoplasmic; it reads THRHIVGEGCPKPHRLRADSTCACGLYKQKRRPLKWVRSN. 6 residues coordinate Zn(2+): His447, His449, Cys455, His459, Cys467, and Cys469.

This sequence belongs to the arenaviridae GPC protein family. As to quaternary structure, interacts with glycoprotein G2. Part of the GP complex (GP-C) together with glycoprotein G1 and glycoprotein G2. The GP-complex interacts with protein Z, which interacts with ribonucleocapsid; these interactions may induce virion budding. In terms of assembly, homotrimer; disulfide-linked. In pre-fusion state, G1 homotrimers bind G2 homotrimers via ionic interactions. Part of the GP complex (GP-C) together with glycoprotein G2 and the stable signal peptide. The GP-complex interacts with protein Z, which interacts with ribonucleocapsid; these interactions may induce virion budding. Homotrimer. Interacts with the stable signal peptide. In pre-fusion state, G2 homotrimers bind G1 homotrimers via ionic interactions. Part of the GP complex (GP-C) together with glycoprotein G1 and the stable signal peptide. Acidification in the endosome triggers rearrangements, which ultimately leads to a 6 helix bundle formed by the two heptad repeat domains (HR1 and HR2) in post-fusion state. The GP-complex interacts with protein Z, which interacts with ribonucleocapsid; these interactions may induce virion budding. Specific enzymatic cleavages in vivo yield mature proteins. GP-C polyprotein is cleaved in the endoplasmic reticulum by the host protease MBTPS1. Only cleaved glycoprotein is incorporated into virions. In terms of processing, the SSP remains stably associated with the GP complex following cleavage by signal peptidase and plays crucial roles in the trafficking of GP through the secretory pathway. Post-translationally, myristoylation is necessary for GP2-mediated fusion activity.

Its subcellular location is the virion membrane. It is found in the host endoplasmic reticulum membrane. It localises to the host Golgi apparatus membrane. The protein resides in the host cell membrane. Functionally, functions as a cleaved signal peptide that is retained as the third component of the GP complex (GP-C). Helps to stabilize the spike complex in its native conformation. The SSP is required for efficient glycoprotein expression, post-translational maturation cleavage of G1 and G2, glycoprotein transport to the cell surface plasma membrane, formation of infectious virus particles, and acid pH-dependent glycoprotein-mediated cell fusion. Forms the virion spikes together with glycoprotein G2. The glycoprotein spike trimers are connected to the underlying matrix. Interacts with the host receptor leading to virus endocytosis. In terms of biological role, forms the virion spikes together with glycoprotein G1. The glycoprotein spike trimers are connected to the underlying matrix. Class I viral fusion protein that directs fusion of viral and host endosomal membranes, leading to delivery of the nucleocapsid into the cytoplasm. Membrane fusion is mediated by irreversible conformational changes induced by acidification. This chain is Pre-glycoprotein polyprotein GP complex, found in Sigmodon hispidus (Hispid cotton rat).